Here is a 182-residue protein sequence, read N- to C-terminus: MKLAEAESKMQHTVEATQRAFNTIRTGRANASLLDKVLVDYYGSPTPLKSLANISTPDATTILIQPYDKSSLNIVEKAISLSDVGLTPSNDGAVIRLNIPPLTSDRRKELVKIAAKYAEEGRVAIRNIRRDAVDSIRKLEKNAEVSEDEAKDQQDKLQKLTNKYTARIDELLVEKEKDISTV.

Belongs to the RRF family.

It localises to the cytoplasm. In terms of biological role, responsible for the release of ribosomes from messenger RNA at the termination of protein biosynthesis. May increase the efficiency of translation by recycling ribosomes from one round of translation to another. The sequence is that of Ribosome-recycling factor from Nostoc sp. (strain PCC 7120 / SAG 25.82 / UTEX 2576).